The primary structure comprises 1241 residues: Putative ABC transporter B family member 8 (1241 aa).

A helical membrane pass occupies residues 24 to 44; the sequence is FADWIDIVLMVLGSVGAIGDG. The region spanning 33-323 is the ABC transmembrane type-1 1 domain; it reads MVLGSVGAIG…ALTEIRYFSE (291 aa). An N-linked (GlcNAc...) asparagine glycan is attached at asparagine 48. Transmembrane regions (helical) follow at residues 82–102, 157–177, 183–203, 263–283, and 297–317; these read LYFVYLGLAILGVAFMEGYCW, VPIFLMHISVFITGLVFSAYF, VVAIPTLVLLLIPGLIYGKYL, GLAVGSSGISFTIWAFLAWYG, and IYAAGISFVLGGISLGTALTE. Residues 360–596 enclose the ABC transporter 1 domain; that stretch reads VEFERVTLVY…NNHYAKLVKL (237 aa). 395–402 is a binding site for ATP; sequence GASGSGKS. Asparagine 571, asparagine 632, and asparagine 648 each carry an N-linked (GlcNAc...) asparagine glycan. Residues 676–964 enclose the ABC transmembrane type-1 2 domain; sequence SLVGCISATT…AGSMTSDLAK (289 aa). A run of 2 helical transmembrane segments spans residues 686-706 and 716-736; these read FGAIQPVYALSIGGMISAFFA and IHIYSLIFISLTFLSITLNLL. The N-linked (GlcNAc...) asparagine glycan is linked to asparagine 773. The next 2 membrane-spanning stretches (helical) occupy residues 797-815 and 821-838; these read ISLLVQTISGVTIAMIIGL and LALVMIAVQPLSILCFYT. Asparagine 855 carries N-linked (GlcNAc...) asparagine glycosylation. The next 2 helical transmembrane spans lie at 899 to 919 and 933 to 953; these read AWLAGFGMGSAQCLTFLTWAL and ISAGDVFKTFFVLVSTGKVIA. Residues 998–1236 enclose the ABC transporter 2 domain; that stretch reads IELKNIDFSY…GGQFSRLAHA (239 aa). 1033-1040 provides a ligand contact to ATP; sequence GTSGCGKS. Asparagine 1187 carries N-linked (GlcNAc...) asparagine glycosylation.

This sequence belongs to the ABC transporter superfamily. ABCB family. Multidrug resistance exporter (TC 3.A.1.201) subfamily.

Its subcellular location is the membrane. In Arabidopsis thaliana (Mouse-ear cress), this protein is Putative ABC transporter B family member 8 (ABCB8).